Here is a 273-residue protein sequence, read N- to C-terminus: Bifunctional protein FolD (273 aa).

NADP(+)-binding positions include 149-151 and valine 215; that span reads GLG.

Belongs to the tetrahydrofolate dehydrogenase/cyclohydrolase family. Homodimer.

It carries out the reaction (6R)-5,10-methylene-5,6,7,8-tetrahydrofolate + NADP(+) = (6R)-5,10-methenyltetrahydrofolate + NADPH. It catalyses the reaction (6R)-5,10-methenyltetrahydrofolate + H2O = (6R)-10-formyltetrahydrofolate + H(+). It functions in the pathway one-carbon metabolism; tetrahydrofolate interconversion. Catalyzes the oxidation of 5,10-methylenetetrahydrofolate to 5,10-methenyltetrahydrofolate and then the hydrolysis of 5,10-methenyltetrahydrofolate to 10-formyltetrahydrofolate. In Mycoplasma genitalium (strain ATCC 33530 / DSM 19775 / NCTC 10195 / G37) (Mycoplasmoides genitalium), this protein is Bifunctional protein FolD.